A 170-amino-acid chain; its full sequence is Protein FAM209 (170 aa).

The first 20 residues, 1 to 20 (MRTLLRWCLFLSLCVSCACA), serve as a signal peptide directing secretion. A helical membrane pass occupies residues 56–76 (WLGNKWLWLFVAIMIYVMLKF). The segment at 83 to 107 (KEQHPPGLRGCQLRSPPKKAQNISP) is disordered.

Interacts with DPY19L2. Interacts with CYLC1; the interaction may be relevant for proper acrosome attachment to the nuclear envelope. Predominately expressed in testis.

It localises to the nucleus inner membrane. Functionally, required for sperm acrosome biogenesis. The chain is Protein FAM209 from Mus musculus (Mouse).